The primary structure comprises 206 residues: Urease accessory protein UreE (206 aa).

The interval 136-206 (PEGGAYAEPS…HGHAHAHDRK (71 aa)) is disordered. 2 stretches are compositionally biased toward basic and acidic residues: residues 148-169 (QGHD…GGHE) and 177-191 (HGHA…EHCG). A compositionally biased stretch (basic residues) spans 192 to 206 (HGHHHHGHAHAHDRK).

Belongs to the UreE family.

The protein localises to the cytoplasm. Involved in urease metallocenter assembly. Binds nickel. Probably functions as a nickel donor during metallocenter assembly. The protein is Urease accessory protein UreE of Bradyrhizobium sp. (strain BTAi1 / ATCC BAA-1182).